The sequence spans 281 residues: ATP phosphoribosyltransferase (281 aa).

The protein belongs to the ATP phosphoribosyltransferase family. Long subfamily. The cofactor is Mg(2+).

The protein localises to the cytoplasm. It carries out the reaction 1-(5-phospho-beta-D-ribosyl)-ATP + diphosphate = 5-phospho-alpha-D-ribose 1-diphosphate + ATP. It functions in the pathway amino-acid biosynthesis; L-histidine biosynthesis; L-histidine from 5-phospho-alpha-D-ribose 1-diphosphate: step 1/9. With respect to regulation, feedback inhibited by histidine. Catalyzes the condensation of ATP and 5-phosphoribose 1-diphosphate to form N'-(5'-phosphoribosyl)-ATP (PR-ATP). Has a crucial role in the pathway because the rate of histidine biosynthesis seems to be controlled primarily by regulation of HisG enzymatic activity. This is ATP phosphoribosyltransferase (hisG) from Archaeoglobus fulgidus (strain ATCC 49558 / DSM 4304 / JCM 9628 / NBRC 100126 / VC-16).